Here is a 434-residue protein sequence, read N- to C-terminus: DNA primase large subunit PriL (434 aa).

Residues C281, C392, C403, and C409 each contribute to the [4Fe-4S] cluster site.

It belongs to the eukaryotic-type primase large subunit family. As to quaternary structure, heterodimer of a small subunit (PriS) and a large subunit (PriL). The cofactor is [4Fe-4S] cluster.

Its function is as follows. Regulatory subunit of DNA primase, an RNA polymerase that catalyzes the synthesis of short RNA molecules used as primers for DNA polymerase during DNA replication. Stabilizes and modulates the activity of the small subunit, increasing the rate of DNA synthesis, and conferring RNA synthesis capability. The DNA polymerase activity may enable DNA primase to also catalyze primer extension after primer synthesis. May also play a role in DNA repair. The sequence is that of DNA primase large subunit PriL from Methanothermobacter thermautotrophicus (strain ATCC 29096 / DSM 1053 / JCM 10044 / NBRC 100330 / Delta H) (Methanobacterium thermoautotrophicum).